A 409-amino-acid chain; its full sequence is Z-DNA-binding protein 1 (409 aa).

2 consecutive Z-binding domains span residues 8-70 (LGTG…SLGG) and 85-147 (SAAQ…TIYR). Residues Lys17 and Lys43 each participate in a glycyl lysine isopeptide (Lys-Gly) (interchain with G-Cter in ubiquitin) cross-link. The tract at residues 59–87 (SSPAPATWSLGGDGASGDGAPEIPEDSAA) is disordered. Short sequence motifs (RIP homotypic interaction motif (RHIM)) lie at residues 183-207 (NSLISISNSKAIQIGHGNVMSRQTI) and 241-265 (LIHLNKSMLRRVQLGHGNEMNLERD). 2 disordered regions span residues 269-307 (HPIFSFSSSPPESTTTADPETAFNMQTPEPGPHPEGGTT) and 323-369 (GNNN…TPSD). The segment covering 270-290 (PIFSFSSSPPESTTTADPETA) has biased composition (low complexity). Over residues 337–351 (GTKESADSQELKEDT) the composition is skewed to basic and acidic residues.

In terms of assembly, homodimer. Interacts (via RIP homotypic interaction motif) with RIPK3; leading to RIPK3 activation and necroptosis; interaction is enhanced by CASP6. Interacts (via RIP homotypic interaction motif) with RIPK1. Component of the AIM2 PANoptosome complex, a multiprotein complex that drives inflammatory cell death (PANoptosis). Ubiquitinated; polyubiquitinated following influenza A virus (IAV) infection. In terms of processing, phosphorylated.

It localises to the cytoplasm. It is found in the nucleus. Its activity is regulated as follows. ZBP1-dependent necroptosis is normally inhibited by RIPK1: RIPK1 inhibits the ZBP1-induced activation of RIPK3 via FADD-mediated recruitment of CASP8, which cleaves RIPK1 and limits TNF-induced necroptosis. Key innate sensor that recognizes and binds Z-RNA structures, which are produced by a number of viruses, such as herpesvirus, orthomyxovirus or flavivirus, and triggers different forms of cell death. ZBP1 acts as an essential mediator of pyroptosis, necroptosis and apoptosis (PANoptosis), an integral part of host defense against pathogens, by activating RIPK3, caspase-8 (CASP8), and the NLRP3 inflammasome. Key activator of necroptosis, a programmed cell death process in response to death-inducing TNF-alpha family members, via its ability to bind Z-RNA: once activated upon Z-RNA-binding, ZBP1 interacts and stimulates RIPK3 kinase, which phosphorylates and activates MLKL, triggering execution of programmed necrosis. In addition to TNF-induced necroptosis, necroptosis can also take place in the nucleus in response to orthomyxoviruses infection: ZBP1 recognizes and binds Z-RNA structures that are produced in infected nuclei by orthomyxoviruses, such as the influenza A virus (IAV), leading to ZBP1 activation, RIPK3 stimulation and subsequent MLKL phosphorylation, triggering disruption of the nuclear envelope and leakage of cellular DNA into the cytosol. ZBP1-dependent cell death in response to IAV infection promotes interleukin-1 alpha (IL1A) induction in an NLRP3-inflammasome-independent manner: IL1A expression is required for the optimal interleukin-1 beta (IL1B) production, and together, these cytokines promote infiltration of inflammatory neutrophils to the lung, leading to the formation of neutrophil extracellular traps. In addition to its direct role in driving necroptosis via its ability to sense Z-RNAs, also involved in PANoptosis triggered in response to bacterial infection: component of the AIM2 PANoptosome complex, a multiprotein complex that triggers PANoptosis. Also acts as the apical sensor of fungal infection responsible for activating PANoptosis. Involved in CASP8-mediated cell death via its interaction with RIPK1 but independently of its ability to sense Z-RNAs. In some cell types, also able to restrict viral replication by promoting cell death-independent responses. In response to flavivirus infection in neurons, promotes a cell death-independent pathway that restricts viral replication: together with RIPK3, promotes a death-independent transcriptional program that modifies the cellular metabolism via up-regulation expression of the enzyme ACOD1/IRG1 and production of the metabolite itaconate. Itaconate inhibits the activity of succinate dehydrogenase, generating a metabolic state in neurons that suppresses replication of viral genomes. This chain is Z-DNA-binding protein 1, found in Rattus norvegicus (Rat).